We begin with the raw amino-acid sequence, 340 residues long: UPF0324 membrane protein OB3406 (340 aa).

The next 9 membrane-spanning stretches (helical) occupy residues 12–31 (SFYT…GVLC), 36–58 (LDIM…TIGL), 94–116 (GLHA…YSLA), 126–148 (SILT…APLV), 155–177 (TAVS…TMMY), 215–237 (IAIV…IGIY), 257–276 (IPWF…IGFL), 281–303 (VNLL…GLNV), and 315–337 (VFFA…IYVM).

It belongs to the UPF0324 family.

It localises to the cell membrane. The polypeptide is UPF0324 membrane protein OB3406 (Oceanobacillus iheyensis (strain DSM 14371 / CIP 107618 / JCM 11309 / KCTC 3954 / HTE831)).